Reading from the N-terminus, the 1939-residue chain is Myosin-6 (1939 aa).

The Myosin N-terminal SH3-like domain occupies 32 to 81 (DIRTECFVPDDKEEFVKAKILSREGGKVIAETENGKTVTVKEDQVLQQNP). The Myosin motor domain occupies 85–780 (DKIEDMAMLT…LLGLLEEMRD (696 aa)). Lysine 129 carries the post-translational modification N6,N6,N6-trimethyllysine. 178–185 (GESGAGKT) serves as a coordination point for ATP. Position 379 is a phosphothreonine (threonine 379). Serine 417 carries the phosphoserine modification. Actin-binding stretches follow at residues 657 to 679 (LNKLMTNLRTTHPHFVRCIIPNE) and 759 to 773 (KFGHTKVFFKAGLLG). The 30-residue stretch at 783 to 812 (LSRIITRMQAQARGQLMRIEFKKIVERRDA) folds into the IQ domain. Residues 842-1939 (LKSAETEKEM…GAKQKMHDEE (1098 aa)) adopt a coiled-coil conformation. Serine 1139 carries the phosphoserine modification. Tyrosine 1261 is subject to Phosphotyrosine. Serine 1271 is subject to Phosphoserine. 2 positions are modified to phosphothreonine: threonine 1277 and threonine 1284. Serine 1309 is subject to Phosphoserine. Residue tyrosine 1310 is modified to Phosphotyrosine. Position 1311 is a phosphothreonine (threonine 1311). Serine 1512 carries the post-translational modification Phosphoserine. Threonine 1515 is subject to Phosphothreonine. Basic and acidic residues-rich tracts occupy residues 1826–1837 (GELEAEQKRNAE) and 1925–1939 (KSRDIGAKQKMHDEE). Disordered stretches follow at residues 1826–1849 (GELEAEQKRNAESVKGMRKSERRI) and 1909–1939 (EERADIAESQVNKLRAKSRDIGAKQKMHDEE).

The protein belongs to the TRAFAC class myosin-kinesin ATPase superfamily. Myosin family. In terms of assembly, muscle myosin is a hexameric protein that consists of 2 heavy chain subunits (MHC), 2 alkali light chain subunits (MLC) and 2 regulatory light chain subunits (MLC-2).

It is found in the cytoplasm. The protein localises to the myofibril. Its function is as follows. Muscle contraction. The protein is Myosin-6 (MYH6) of Homo sapiens (Human).